A 186-amino-acid polypeptide reads, in one-letter code: Thiol:disulfide interchange protein CycY (186 aa).

Positions M1 to G20 are cleaved as a signal peptide. The region spanning D47–G182 is the Thioredoxin domain. A disulfide bridge links C80 with C83.

This sequence belongs to the thioredoxin family. DsbE subfamily.

It localises to the periplasm. Its function is as follows. Required for disulfide bond formation in some periplasmic proteins. Also acts as a disulfide oxidoreductase in cytochromes c biogenesis. The cysteines of apocytochromes c must be in the reduced state for covalent linkage between the two moieties to occur. This Rhizobium leguminosarum bv. viciae protein is Thiol:disulfide interchange protein CycY (cycY).